Here is a 353-residue protein sequence, read N- to C-terminus: GTPase Obg (353 aa).

Residues 1 to 159 (MKFLDEAKVY…RWIWLRLKLI (159 aa)) enclose the Obg domain. Residues 160–327 (ADAGLVGLPN…ALRALAAVIG (168 aa)) enclose the OBG-type G domain. GTP-binding positions include 166–173 (GLPNAGKS), 191–195 (FTTLH), 212–215 (DIPG), 279–282 (NKID), and 308–310 (SGV). Positions 173 and 193 each coordinate Mg(2+).

It belongs to the TRAFAC class OBG-HflX-like GTPase superfamily. OBG GTPase family. As to quaternary structure, monomer. The cofactor is Mg(2+).

Its subcellular location is the cytoplasm. An essential GTPase which binds GTP, GDP and possibly (p)ppGpp with moderate affinity, with high nucleotide exchange rates and a fairly low GTP hydrolysis rate. Plays a role in control of the cell cycle, stress response, ribosome biogenesis and in those bacteria that undergo differentiation, in morphogenesis control. This Rhodopseudomonas palustris (strain BisB5) protein is GTPase Obg.